The sequence spans 385 residues: Proteinase-activated receptor 4 (385 aa).

An N-terminal signal peptide occupies residues 1–17 (MWGRLLLWPLVLGFSLS). Residues 18–47 (GGTQTPSVYDESGSTGGGDDSTPSILPAPR) constitute a propeptide, removed for receptor activation. Residues 21 to 42 (QTPSVYDESGSTGGGDDSTPSI) form a disordered region. At 48-82 (GYPGQVCANDSDTLELPDSSRALLLGWVPTRLVPA) the chain is on the extracellular side. A glycan (N-linked (GlcNAc...) asparagine) is linked at asparagine 56. The helical transmembrane segment at 83–103 (LYGLVLVVGLPANGLALWVLA) threads the bilayer. Over 104–108 (TQAPR) the chain is Cytoplasmic. The helical transmembrane segment at 109-129 (LPSTMLLMNLAAADLLLALAL) threads the bilayer. Over 130 to 151 (PPRIAYHLRGQRWPFGEAACRL) the chain is Extracellular. Cysteines 149 and 228 form a disulfide. The chain crosses the membrane as a helical span at residues 152–172 (ATAALYGHMYGSVLLLAAVSL). The Cytoplasmic segment spans residues 173–192 (DRYLALVHPLRARALRGRRL). The helical transmembrane segment at 193–213 (ALGLCMAAWLMAAALALPLTL) threads the bilayer. Residues 214–247 (QRQTFRLARSDRVLCHDALPLDAQASHWQPAFTC) are Extracellular-facing. The helical transmembrane segment at 248–268 (LALLGCFLPLLAMLLCYGATL) threads the bilayer. The Cytoplasmic segment spans residues 269–283 (HTLAASGRRYGHALR). A helical transmembrane segment spans residues 284–304 (LTAVVLASAVAFFVPSNLLLL). Over 305–319 (LHYSDPSPSAWGNLY) the chain is Extracellular. Residues 320-343 (GAYVPSLALSTLNSCVDPFIYYYV) form a helical membrane-spanning segment. The Cytoplasmic segment spans residues 344–385 (SAEFRDKVRAGLFQRSPGDTVASKASAEGGSRGMGTHSSLLQ). The segment at 362–385 (DTVASKASAEGGSRGMGTHSSLLQ) is disordered.

This sequence belongs to the G-protein coupled receptor 1 family. Post-translationally, a proteolytic cleavage generates a new N-terminus that functions as a tethered ligand. In terms of tissue distribution, widely expressed, with highest levels in lung, pancreas, thyroid, testis and small intestine. Not expressed in brain, kidney, spinal cord and peripheral blood leukocytes. Also detected in platelets.

It localises to the cell membrane. With respect to regulation, activated upon interaction by mucunain, a cowhage (Mucuna pruriens) plant cysteine proteinase. Functionally, receptor for activated thrombin or trypsin coupled to G proteins that stimulate phosphoinositide hydrolysis. May play a role in platelets activation. The protein is Proteinase-activated receptor 4 (F2RL3) of Homo sapiens (Human).